The following is a 957-amino-acid chain: Collagen alpha-1(XXI) chain (957 aa).

Residues 1 to 22 form the signal peptide; it reads MAHYITFLCMVLVLLLQNSVLA. Residues 37-211 enclose the VWFA domain; that stretch reads DLVFILDGSY…KIREVMKQKL (175 aa). A glycan (N-linked (GlcNAc...) asparagine) is linked at Asn62. One can recognise a Laminin G-like domain in the interval 230–412; the sequence is GFDILLGLDV…VQKLRIYCDP (183 aa). Collagen-like domains lie at 448–500, 501–542, and 543–594; these read PGKP…GARG, LPGY…GDKG, and SPGF…SPGA. 2 disordered regions span residues 448–786 and 825–938; these read PGKP…KPGR and GSPG…ICDP. 2 stretches are compositionally biased toward low complexity: residues 451-462 and 471-481; these read PGLQGPKGDPGL and QPGQDGKPGYQ. Residues 507 to 517 are compositionally biased toward basic and acidic residues; sequence EPGRDGDKGDR. 2 stretches are compositionally biased toward low complexity: residues 618-637 and 705-729; these read QKGE…PGMP and EKGI…IQGH. 4 consecutive Collagen-like domains span residues 681–733, 734–787, 825–882, and 884–934; these read SPGE…HGAK, GERG…PGRE, GSPG…GSQG, and GYPG…GPPG. Positions 732–742 are enriched in basic and acidic residues; it reads AKGERGEKGEP. Over residues 829–838 the composition is skewed to pro residues; that stretch reads IPGPPGPIGP. Positions 839–874 are enriched in low complexity; it reads EGPRGLPGLPGRDGVPGLVGVPGRPGVRGLKGLPGR. Residues 889 to 900 show a composition bias toward pro residues; sequence QGPPGPPGPEGP.

This sequence belongs to the fibril-associated collagens with interrupted helices (FACIT) family. In terms of tissue distribution, highly expressed in lymph node, jejunum, pancreas, stomach, trachea, testis, uterus and placenta; moderately expressed in brain, colon, lung, prostate, spinal cord, salivary gland and vascular smooth-muscle cells and very weakly expressed in heart, liver, kidney, bone marrow, spleen, thymus, skeletal muscle, adrenal gland and peripheral leukocytes. Expression in heart was higher in the right ventricle and atrium than in the left ventricle and atrium.

The protein resides in the secreted. Its subcellular location is the extracellular space. It localises to the extracellular matrix. It is found in the cytoplasm. This chain is Collagen alpha-1(XXI) chain (COL21A1), found in Homo sapiens (Human).